Here is a 248-residue protein sequence, read N- to C-terminus: Probable succinyl-CoA:3-ketoacid coenzyme A transferase subunit A (248 aa).

24–30 (GGFGLCG) serves as a coordination point for CoA.

This sequence belongs to the 3-oxoacid CoA-transferase subunit A family. As to quaternary structure, heterodimer of a subunit A and a subunit B.

It catalyses the reaction a 3-oxo acid + succinyl-CoA = a 3-oxoacyl-CoA + succinate. This Mycobacterium bovis (strain ATCC BAA-935 / AF2122/97) protein is Probable succinyl-CoA:3-ketoacid coenzyme A transferase subunit A (scoA).